The chain runs to 1909 residues: MCHAAQETPLLHHFMAPVMARWPPFGLCLLLLLLSPPPLPLTGAHRFSAPNTTLNHLALAPGRGTLYVGAVNRLFQLSPELQLEAVAVTGPVIDSPDCVPFRDPAECPQAQLTDNANQLLLVSSRAQELVACGQVRQGVCETRRLGDVAEVLYQAEDPGDGQFVAANTPGVATVGLVVPLPGRDLLLVARGLAGKLSAGVPPLAIRQLAGSQPFSSEGLGRLVVGDFSDYNNSYVGAFADARSAYFVFRRRGARAQAEYRSYVARVCLGDTNLYSYVEVPLACQGQGLIQAAFLAPGTLLGVFAAGPRGTQAALCAFPMVELGASMEQARRLCYTAGGRGPSGAEEATVEYGVTSRCVTLPLDSPESYPCGDEHTPSPIAGRQPLEVQPLLKLGQPVSAVAALQADGHMIAFLGDTQGQLYKVFLHGSQGQVYHSQQVGPPGSAISPDLLLDSSGSHLYVLTAHQVDRIPVAACPQFPDCASCLQAQDPLCGWCVLQGRCTRKGQCGRAGQLNQWLWSYEEDSHCLHIQSLLPGHHPRQEQGQVTLSVPRLPILDADEYFHCAFGDYDSLAHVEGPHVACVTPPQDQVPLNPPGTDHVTVPLALMFEDVTVAATNFSFYDCSAVQALEAAAPCRACVGSIWRCHWCPQSSHCVYGEHCPEGERTIYSAQEVDIQVRGPGACPQVEGLAGPHLVPVGWESHLALRVRNLQHFRGLPASFHCWLELPGELRGLPATLEETAGDSGLIHCQAHQFYPSMSQRELPVPIYVTQGEAQRLDNTHALYVILYDCAMGHPDCSHCQAANRSLGCLWCADGQPACRYGPLCPPGAVELLCPAPSIDAVEPLTGPPEGGLALTILGSNLGRAFADVQYAVSVASRPCNPEPSLYRTSARIVCVTSPAPNGTTGPVRVAIKSQPPGISSQHFTYQDPVLLSLSPRWGPQAGGTQLTIRGQHLQTGGNTSAFVGGQPCPILEPVCPEAIVCRTRPQAAPGEAAVLVVFGHAQRTLLASPFRYTANPQLVAAEPSASFRGGGRLIRVRGTGLDVVQRPLLSVWLEADAEVQASRAQPQDPQPRRSCGAPAADPQACIQLGGGLLQCSTVCSVNSSSLLLCRSPAVPDRAHPQRVFFTLDNVQVDFASASGGQGFLYQPNPRLAPLSREGPARPYRLKPGHVLDVEGEGLNLGISKEEVRVHIGRGECLVKTLTRTHLYCEPPAHAPQPANGSGLPQFVVQMGNVQLALGPVQYEAEPPLSAFPVEAQAGVGMGAAVLIAAVLLLTLMYRHKSKQALRDYQKVLVQLESLETGVGDQCRKEFTDLMTEMTDLSSDLEGSGIPFLDYRTYAERAFFPGHGGCPLQPKPEGPGEDGHCATVRQGLTQLSNLLNSKLFLLTLIHTLEEQPSFSQRDRCHVASLLSLALHGKLEYLTDIMRTLLGDLAAHYVHRNPKLMLRRTETMVEKLLTNWLSICLYAFLREVAGEPLYMLFRAIQYQVDKGPVDAVTGKAKRTLNDSRLLREDVEFQPLTLMVLVGPGAGGAAGSSEMQRVPARVLDTDTITQVKEKVLDQVYKGTPFSQRPSVHALDLEWRSGLAGHLTLSDEDLTSVTQNHWKRLNTLQHYKVPDGATVGLVPQLHRGSTISQSLAQRCPLGENIPTLEDGEEGGVCLWHLVKATEEPEGAKVRCSSLREREPARAKAIPEIYLTRLLSMKGTLQKFVDDTFQAILSVNRPIPIAVKYLFDLLDELAEKHGIEDPGTLHIWKTNSLLLRFWVNALKNPQLIFDVRVSDNVDAILAVIAQTFIDSCTTSEHKVGRDSPVNKLLYAREIPRYKQMVERYYADIRQSSPASYQEMNSALAELSGNYTSAPHCLEALQELYNHIHRYYDQIISALEEDPVGQKLQLACRLQQVAALVENKVTDL.

The N-terminal stretch at 1-44 is a signal peptide; sequence MCHAAQETPLLHHFMAPVMARWPPFGLCLLLLLLSPPPLPLTGA. Residues 45 to 471 form the Sema domain; sequence HRFSAPNTTL…TAHQVDRIPV (427 aa). Residues 45-1255 are Extracellular-facing; it reads HRFSAPNTTL…PLSAFPVEAQ (1211 aa). Asn-51 is a glycosylation site (N-linked (GlcNAc...) asparagine). Disulfide bonds link Cys-98/Cys-107 and Cys-132/Cys-140. Asn-231 carries N-linked (GlcNAc...) asparagine glycosylation. 8 cysteine pairs are disulfide-bonded: Cys-267-Cys-370, Cys-283-Cys-315, Cys-333-Cys-357, Cys-474-Cys-491, Cys-480-Cys-525, Cys-483-Cys-500, Cys-494-Cys-506, and Cys-562-Cys-580. The PSI 1 domain occupies 473-526; sequence ACPQFPDCASCLQAQDPLCGWCVLQGRCTRKGQCGRAGQLNQWLWSYEEDSHCL. N-linked (GlcNAc...) asparagine glycosylation is present at Asn-615. 2 PSI domains span residues 620–682 and 787–833; these read DCSA…GACP and DCAM…LLCP. Asn-802, Asn-900, Asn-957, Asn-1101, and Asn-1218 each carry an N-linked (GlcNAc...) asparagine glycan. IPT/TIG domains follow at residues 835–925, 927–1012, 1015–1145, and 1159–1244; these read PSID…FTYQ, PVLL…FRYT, PQLV…FLYQ, and ARPY…YEAE. The helical transmembrane segment at 1256-1276 threads the bilayer; the sequence is AGVGMGAAVLIAAVLLLTLMY. Topologically, residues 1277–1909 are cytoplasmic; it reads RHKSKQALRD…ALVENKVTDL (633 aa).

It belongs to the plexin family. In terms of assembly, interacts (via cytoplasmic domain) with RAC1 and ARHGDIA. Binds MET and MST1R. Interacts (via cytoplasmic domain) with FSCN1. Interacts with RIT2/RIN. May form homodimers (via Sema domain). Expression detected in Purkinje and granular cells in cerebellum, and in brain neocortex but not in corpus callosum. Expressed in glioma cells and embryonic kidney cells (at protein level). Expressed in brain, liver, pancreas and placenta, with weak expression detected also in lung and kidney. Expressed in several glioma cell lines.

The protein resides in the cell membrane. In terms of biological role, receptor for SEMA5A that plays a role in axon guidance, invasive growth and cell migration. Stimulates neurite outgrowth and mediates Ca(2+)/Mg(2+)-dependent cell aggregation. In glioma cells, SEMA5A stimulation of PLXNB3 results in the disassembly of F-actin stress fibers, disruption of focal adhesions and cellular collapse as well as inhibition of cell migration and invasion through ARHGDIA-mediated inactivation of RAC1. This Homo sapiens (Human) protein is Plexin-B3 (PLXNB3).